The following is a 454-amino-acid chain: tRNA modification GTPase MnmE (454 aa).

3 residues coordinate (6S)-5-formyl-5,6,7,8-tetrahydrofolate: Arg-23, Glu-80, and Lys-120. The TrmE-type G domain occupies 216–377; sequence GMKVVIAGRP…LRNNLKQSMG (162 aa). K(+) is bound at residue Asn-226. GTP-binding positions include 226–231, 245–251, 270–273, 335–338, and 358–360; these read NAGKSS, TDIAGTT, DTAG, NKAD, and SAR. Ser-230 lines the Mg(2+) pocket. Thr-245, Ile-247, and Thr-250 together coordinate K(+). A Mg(2+)-binding site is contributed by Thr-251. (6S)-5-formyl-5,6,7,8-tetrahydrofolate is bound at residue Lys-454.

It belongs to the TRAFAC class TrmE-Era-EngA-EngB-Septin-like GTPase superfamily. TrmE GTPase family. As to quaternary structure, homodimer. Heterotetramer of two MnmE and two MnmG subunits. The cofactor is K(+).

The protein resides in the cytoplasm. In terms of biological role, exhibits a very high intrinsic GTPase hydrolysis rate. Involved in the addition of a carboxymethylaminomethyl (cmnm) group at the wobble position (U34) of certain tRNAs, forming tRNA-cmnm(5)s(2)U34. This is tRNA modification GTPase MnmE from Salmonella paratyphi A (strain AKU_12601).